The primary structure comprises 99 residues: Nucleoid-associated protein SZO_16661 (99 aa).

Belongs to the YbaB/EbfC family. As to quaternary structure, homodimer.

The protein resides in the cytoplasm. The protein localises to the nucleoid. In terms of biological role, binds to DNA and alters its conformation. May be involved in regulation of gene expression, nucleoid organization and DNA protection. The chain is Nucleoid-associated protein SZO_16661 from Streptococcus equi subsp. zooepidemicus (strain H70).